A 2567-amino-acid chain; its full sequence is MAISSRLALWEQKIREEDKSPPPSSPPPLFSVIPGGFIKQLVRGTEKEAKEARQRKQLAVASPEREIPEISISQPNSKSSSGTRSGSQQISQDDQSSSPGSSDILGKESEGSRSPDPEQMTSINGEKAQELGSSATPTKKTVPFKRGVRRGDVLLMVAKLDPDSAKPEKTHPHDAPPCKTSPPATDTGKEKKGETSRTPCGSQASTEILAPKAEKTRTGGLGDPGQGTVALKKGEEGQSIVGKGLGTPKTTELKEAEPQGKDRQGTRPQAQGPGEGVRPGKAEKEGAEPTNTVEKGNVSKDVGSEGKHVRPQIPGRKWGGFLGRRSKWDGPQNKKDKEGVLLSKAEKTGEPQTQMEKTSQVQGELGDDLRMGEKAGELRSTTGKAGESWDKKEKMGQPQGKSGNAGEARSQTEKGCEAPKEVSTMVESPAAPGKGGWPGSRGQEAEEPCSRAGDGAGALETELEGPSQPALEKDAERPRIRKENQDGPAPQEEGKGGQSRDSDQAPEDRWYEAEKVWLAQKDGFTLATVLKPDEGTADLPAGRVRLWIDADKTITEVDEEHVHRANPPELDQVEDLASLISVNESSVLNTLLQRYKAQLLHTCTGPDLIVLQPRGPSVPSAGKVPKGRRDGLPAHIGSMAQRAYWALLNQRRDQSIVALGWSGAGKTTCCEQVLEHLVGMAGSVDGRVSVEKIRATFTVLRAFGSVSMAHSRSATRFSMVMSLDFNATGRITAAQLQTMLLEKSRVARQPEGESNFLVFSQMLAGLDLDLRTELNLHQMADSSSFGMGVWSKPEDKQKAAAAFAQLQGAMEMLGISESEQRAVWRVLAAIYHLGAAGACKVGRKQFMRFEWANYAAEALGCEYEELNTATFKHHLRQIIQQMTFGPSRWGLEDEETSSGLKMTGVDCVEGMASGLYQELFAAVVSLINRSFSSHHLSMASIMVVDSPGFQNPRHQGKDRAATFEELCHNYAHERLQLLFYQRTFVSTLQRYQEEGVPVQFDLPDPSPGTTVAVVDQNPSQVRLPAGGGAQDARGLFWVLDEEVHVEGSSDSVVLERLCAAFEKKGAGTEGSSALRTCEQPLQCEIFHQLGWDPVRYDLTGWLHRAKPNLSALDAPQVLHQSKREELRSLFQARAKLPPVCRAVAGLEGTSQQALQRSRMVRRTFASSLAAVRRKAPCSQIKLQMDALTSMIKRSRLHFIHCLVPNPVVESRSGQESPPPPQPGRDKPGAGGPLALDIPALRVQLAGFHILEALRLHRTGYADHMGLTRFRRQFQVLDAPLLKKLMSTSEGIDERKAVEELLETLDLEKKAVAVGHSQVFLKAGVISRLEKQREKLVSQSIVLFQAACKGFLSRQEFKKLKIRRLAAQCIQKNVAVFLAVKDWPWWQLLGSLQPLLSATIGTEQLRAKEEELTTLRRKLEKSEKLRNELRQNTDLLESKIADLTSDLADERFKGDVACQVLESERAERLQAFREVQELKSKHEQVQKKLGDVNKQLEEAQQKIQLNDLERNPTGGADEWQMRFDCAQMENEFLRKRLQQCEERLDSELTARKELEQKLGELQSAYDGAKKMAHQLKRKCHHLTCDLEDTCVLLENQQSRNHELEKKQKKFDLQLAQALGESVFEKGLREKVTQENTSVRWELGQLQQQLKQKEQEASQLKQQVEMLQDHKRELLGSPSLGENCVAGLKERLWKLESSALEQQKIQSQQENTIKQLEQLRQRFELEIERMKQMHQKDREDQEEELEDVRQSCQKRLHQLEMQLEQEYEEKQMVLHEKQDLEGLIGTLCDQIGHRDFDVEKRLRRDLRRTHALLSDVQLLLGTMEDGKTSVSKEELEKVHSQLEQSEAKCEEALKTQKVLTADLESMHSELENMTRNKSLVDEQLYRLQFEKADLLKRIDEDQDDLNELMQKHKDLIAQSAADIGQIQELQLQLEEAKKEKHKLQEQLQVAQMRIEYLEQSTVDRAIVSRQEAVICDLENKTEFQKVQIKRFEVLVIRLRDSLIKMGEELSQAATSESQQRESSQYYQRRLEELKADMEELVQREAEASRRCMELEKYVEELAAVRQTLQTDLETSIRRIADLQAALEEVASSDSDTESVQTAVDCGSSGRKEMDNVSILSSQPEGSLQSWLSCTLSLATDTMRTPSRQSATSSRILSPRINEEAGDTERTQSALALSRARSTNVHSKTSGDKPVSPHFVRRQKYCHFGDGEVLAVQRKSTERLEPASSPLASRSTNTSPLSREKLPSPSAALSEFVEGLRRKRAQRGQGSTLGLEDWPTLPIYQTTGASTLRRGRAGSDEGNLSLRVGAKSPLEIEGAAGGLLRSTSLKCISSDGVGGTTLLPEKSKTQFSSCESLLESRPSMGRKLSSPTTPRDMLLSPTLRPRRRCLESSVDDAGCPDLGKEPLVFQNRQFAHLMEEPLGSDPFSWKLPSLDYERKTKVDFDDFLPAIRKPQTPTSLAGSAKGGQDGSQRSSIHFETEEANRSFLSGIKTILKKSPEPKEDPAHLSDSSSSSGSIVSFKSADSIKSRPGIPRLAGDGGERTSPERREPGTGRKDDDVASIMKKYLQK.

The interval 41-508 is disordered; the sequence is LVRGTEKEAK…SRDSDQAPED (468 aa). Over residues 44–54 the composition is skewed to basic and acidic residues; the sequence is GTEKEAKEARQ. Low complexity predominate over residues 71–104; that stretch reads SISQPNSKSSSGTRSGSQQISQDDQSSSPGSSDI. Basic and acidic residues-rich tracts occupy residues 105 to 116 and 160 to 176; these read LGKESEGSRSPD and LDPD…HDAP. Residues 196–206 are compositionally biased toward polar residues; it reads SRTPCGSQAST. 3 stretches are compositionally biased toward basic and acidic residues: residues 251-265, 278-287, and 326-349; these read TELK…DRQG, RPGKAEKEGA, and SKWD…EKTG. Residues 350 to 362 show a composition bias toward polar residues; sequence EPQTQMEKTSQVQ. Composition is skewed to basic and acidic residues over residues 367-377, 410-420, 471-485, and 492-508; these read DDLRMGEKAGE, SQTEKGCEAPK, LEKD…KENQ, and EEGK…APED. Positions 571 to 1333 constitute a Myosin motor domain; the sequence is DQVEDLASLI…VISRLEKQRE (763 aa). 660-667 is a binding site for ATP; the sequence is GWSGAGKT. The tract at residues 1208 to 1232 is disordered; that stretch reads VESRSGQESPPPPQPGRDKPGAGGP. The tract at residues 1213 to 1240 is GPA; sequence GQESPPPPQPGRDKPGAGGPLALDIPAL. Position 1216 is a phosphoserine (serine 1216). In terms of domain architecture, IQ spans 1336-1365; that stretch reads VSQSIVLFQAACKGFLSRQEFKKLKIRRLA. Coiled-coil stretches lie at residues 1396–1783, 1825–1961, and 2014–2090; these read SATI…GLIG, KTSV…STVD, and ESQQ…VASS. Residues 1426 to 2083 form a tail region; sequence NELRQNTDLL…IRRIADLQAA (658 aa). A Phosphoserine modification is found at serine 1829. The segment covering 2139 to 2153 has biased composition (polar residues); the sequence is TMRTPSRQSATSSRI. 2 disordered regions span residues 2139–2194 and 2217–2249; these read TMRT…PVSP and STER…PSAA. The segment covering 2158–2167 has biased composition (basic and acidic residues); that stretch reads INEEAGDTER. Positions 2168–2185 are enriched in polar residues; that stretch reads TQSALALSRARSTNVHSK. Serine 2193 bears the Phosphoserine mark. Positions 2227-2238 are enriched in polar residues; it reads PLASRSTNTSPL. A phosphoserine mark is found at serine 2296 and serine 2309. Residues 2357-2376 are disordered; that stretch reads SRPSMGRKLSSPTTPRDMLL. Serine 2377 bears the Phosphoserine mark. Disordered regions lie at residues 2444–2471 and 2494–2567; these read FLPA…SQRS and KSPE…YLQK. The segment covering 2494-2504 has biased composition (basic and acidic residues); sequence KSPEPKEDPAH. Residues 2506 to 2520 are compositionally biased toward low complexity; sequence SDSSSSSGSIVSFKS. Residues 2537-2556 are compositionally biased toward basic and acidic residues; it reads GGERTSPERREPGTGRKDDD.

It belongs to the TRAFAC class myosin-kinesin ATPase superfamily. Myosin family. Homodimer. May interact with F actin through the GPA motif (Gly/Pro/Ala-rich). In terms of tissue distribution, selectively expressed in cardiac and skeletal muscles. Weakly expressed in testis, pancreas, placenta, prostate, lung and thymus.

It localises to the cytoplasm. The protein resides in the nucleus. It is found in the myofibril. The protein localises to the sarcomere. Its function is as follows. May be involved in intracellular trafficking of the muscle cell when in the cytoplasm, whereas entering the nucleus, may be involved in the regulation of muscle specific genes. May play a role in the control of tumor development and progression; restored MYO18B expression in lung cancer cells suppresses anchorage-independent growth. The polypeptide is Unconventional myosin-XVIIIb (MYO18B) (Homo sapiens (Human)).